A 210-amino-acid chain; its full sequence is Tissue inhibitor of metalloproteinase (210 aa).

The N-terminal stretch at 1–27 (MDLRKHLGLLTLLLVAVFAFYGRPADA) is a signal peptide. Cys-28 serves as a coordination point for Zn(2+). 2 involved in metalloproteinase-binding regions span residues 28-31 (CSCM) and 93-94 (DA). 5 cysteine pairs are disulfide-bonded: Cys-28–Cys-96, Cys-30–Cys-118, Cys-145–Cys-195, Cys-150–Cys-155, and Cys-165–Cys-180. An NTR domain is found at 28–145 (CSCMPSHPQT…SGGYAKATNC (118 aa)).

Belongs to the protease inhibitor I35 (TIMP) family. Expressed in heads of female and male adult flies. Expressed at the time of eclosion in unopened wings of adult flies. Strongly expressed at the tip of ovarian germarium region 1 where germline stem cells (GSCs) and cystoblasts reside and in region 2 of the germarium.

Its subcellular location is the secreted. Functionally, metalloproteinase inhibitor that acts on both matrix metalloproteinases Mmp1 and Mmp2 in vitro. Complexes with metalloproteinases and irreversibly inactivates them by binding to their catalytic zinc cofactor. Required for wing maturation which is the final step in morphogenesis of the adult fly. Involved in the negative regulation of developmental tissue invasion for imaginal disk eversion during metamorphosis by inhibiting Mmp-mediated basement membrane (BM) degradation. Required for oogenesis and for the long-term maintainance of germarial structure and shape in the adult ovaries. Required for maintaining composition and biophysical properties of the extracellular matrix (ECM), and for the normal organization and cyst production of the germline stem cell (GSC) niche. In Drosophila melanogaster (Fruit fly), this protein is Tissue inhibitor of metalloproteinase.